A 283-amino-acid polypeptide reads, in one-letter code: NAD kinase (283 aa).

Asp-68 serves as the catalytic Proton acceptor. NAD(+) contacts are provided by residues 68-69, Arg-73, 142-143, Arg-153, Arg-170, Asp-172, and 183-188; these read DG, ND, and TAYSLS.

This sequence belongs to the NAD kinase family. A divalent metal cation is required as a cofactor.

The protein resides in the cytoplasm. The enzyme catalyses NAD(+) + ATP = ADP + NADP(+) + H(+). Functionally, involved in the regulation of the intracellular balance of NAD and NADP, and is a key enzyme in the biosynthesis of NADP. Catalyzes specifically the phosphorylation on 2'-hydroxyl of the adenosine moiety of NAD to yield NADP. The protein is NAD kinase of Symbiobacterium thermophilum (strain DSM 24528 / JCM 14929 / IAM 14863 / T).